Reading from the N-terminus, the 197-residue chain is MTNSRTNPKVDEFLSKAKKWKEEFEKLRTIILDCELTEDFKWMHPCYTYHNKNIVLIHGFKEYCALLFHKGVLLQDTDGILIQQTENVQAARQIRFTNVQEINELENILKAYIHEAIEVEKAGLKVDVNKNIELNIPEELQNKFDEIPALKIAFEALTPGRQRAYTLYFSQAKQSKTRESRVEKYVQKILDGKGLKD.

This is an uncharacterized protein from Bacillus subtilis (strain 168).